The primary structure comprises 513 residues: Histidine ammonia-lyase (513 aa).

The segment at residues 144 to 146 (ASG) is a cross-link (5-imidazolinone (Ala-Gly)). Residue Ser145 is modified to 2,3-didehydroalanine (Ser).

This sequence belongs to the PAL/histidase family. Post-translationally, contains an active site 4-methylidene-imidazol-5-one (MIO), which is formed autocatalytically by cyclization and dehydration of residues Ala-Ser-Gly.

It is found in the cytoplasm. It carries out the reaction L-histidine = trans-urocanate + NH4(+). It participates in amino-acid degradation; L-histidine degradation into L-glutamate; N-formimidoyl-L-glutamate from L-histidine: step 1/3. The protein is Histidine ammonia-lyase of Streptococcus gordonii (strain Challis / ATCC 35105 / BCRC 15272 / CH1 / DL1 / V288).